The sequence spans 159 residues: Phosphopantetheine adenylyltransferase (159 aa).

A substrate-binding site is contributed by T10. ATP contacts are provided by residues 10-11 (TF) and H18. Substrate contacts are provided by K42, M74, and R88. Residues 89 to 91 (GLR), E99, and 124 to 130 (WSFISSS) each bind ATP.

It belongs to the bacterial CoaD family. As to quaternary structure, homohexamer. Mg(2+) is required as a cofactor.

Its subcellular location is the cytoplasm. The enzyme catalyses (R)-4'-phosphopantetheine + ATP + H(+) = 3'-dephospho-CoA + diphosphate. The protein operates within cofactor biosynthesis; coenzyme A biosynthesis; CoA from (R)-pantothenate: step 4/5. In terms of biological role, reversibly transfers an adenylyl group from ATP to 4'-phosphopantetheine, yielding dephospho-CoA (dPCoA) and pyrophosphate. This chain is Phosphopantetheine adenylyltransferase, found in Shigella dysenteriae serotype 1 (strain Sd197).